Consider the following 576-residue polypeptide: 5'-nucleotidase (576 aa).

An N-terminal signal peptide occupies residues 1 to 28; sequence MRPAAATAPKWLLLALSALLPLWPTAKS. Zn(2+) is bound by residues D38 and H40. A disulfide bridge links C53 with C59. An N-linked (GlcNAc...) asparagine glycan is attached at N55. Residues D87, N119, H222, and H245 each coordinate Zn(2+). N-linked (GlcNAc...) asparagine glycosylation is found at N313, N335, and N349. 2 disulfide bridges follow: C355/C360 and C367/C389. R356 serves as a coordination point for AMP. R356 contacts IMP. AMP contacts are provided by N392 and R397. Residues N392 and R397 each contribute to the IMP site. A glycan (N-linked (GlcNAc...) asparagine) is linked at N405. Residue F419 participates in AMP binding. F419 is an IMP binding site. Cysteines 478 and 481 form a disulfide. AMP-binding residues include Y502 and D508. Y502 and D508 together coordinate IMP. S551 is lipidated: GPI-anchor amidated serine. Residues 552–576 constitute a propeptide, removed in mature form; sequence AASHYQGSFPLIILSFWAVILVLYQ.

This sequence belongs to the 5'-nucleotidase family. In terms of assembly, homodimer. It depends on Zn(2+) as a cofactor. As to expression, expressed in the brain.

It is found in the cell membrane. It catalyses the reaction a ribonucleoside 5'-phosphate + H2O = a ribonucleoside + phosphate. It carries out the reaction a 2'-deoxyribonucleoside 5'-phosphate + H2O = a 2'-deoxyribonucleoside + phosphate. The enzyme catalyses dTMP + H2O = thymidine + phosphate. The catalysed reaction is CMP + H2O = cytidine + phosphate. It catalyses the reaction IMP + H2O = inosine + phosphate. It carries out the reaction AMP + H2O = adenosine + phosphate. The enzyme catalyses GMP + H2O = guanosine + phosphate. The catalysed reaction is UMP + H2O = uridine + phosphate. It catalyses the reaction dAMP + H2O = 2'-deoxyadenosine + phosphate. It carries out the reaction dCMP + H2O = 2'-deoxycytidine + phosphate. In terms of biological role, catalyzes the hydrolysis of nucleotide monophosphates, releasing inorganic phosphate and the corresponding nucleoside. AMP is the preferred substrate but can also hydrolyze CMP and GMP. Shows a preference for ribonucleotide monophosphates over their equivalent deoxyribose forms. Other substrates include IMP, UMP, dAMP, dCMP, dTMP, NAD and NMN. The chain is 5'-nucleotidase (Nt5e) from Rattus norvegicus (Rat).